We begin with the raw amino-acid sequence, 401 residues long: 8-amino-7-oxononanoate synthase (401 aa).

Position 19 (arginine 19) interacts with substrate. Residue 106-107 (GY) participates in pyridoxal 5'-phosphate binding. A substrate-binding site is contributed by histidine 131. Residues serine 176, histidine 204, and threonine 233 each coordinate pyridoxal 5'-phosphate. Lysine 236 carries the N6-(pyridoxal phosphate)lysine modification. Threonine 350 serves as a coordination point for substrate.

This sequence belongs to the class-II pyridoxal-phosphate-dependent aminotransferase family. BioF subfamily. In terms of assembly, homodimer. It depends on pyridoxal 5'-phosphate as a cofactor.

It carries out the reaction 6-carboxyhexanoyl-[ACP] + L-alanine + H(+) = (8S)-8-amino-7-oxononanoate + holo-[ACP] + CO2. The protein operates within cofactor biosynthesis; biotin biosynthesis. Catalyzes the decarboxylative condensation of pimeloyl-[acyl-carrier protein] and L-alanine to produce 8-amino-7-oxononanoate (AON), [acyl-carrier protein], and carbon dioxide. The polypeptide is 8-amino-7-oxononanoate synthase (Pseudomonas aeruginosa (strain ATCC 15692 / DSM 22644 / CIP 104116 / JCM 14847 / LMG 12228 / 1C / PRS 101 / PAO1)).